A 541-amino-acid polypeptide reads, in one-letter code: Synaptotagmin-1 (541 aa).

Over 1–11 (MGFFSTILGFC) the chain is Extracellular. A helical transmembrane segment spans residues 12 to 32 (GFGVGISLGLVIGYVLFVYLL). Over 33 to 541 (PNDVKDPEIR…QIELEWRTAS (509 aa)) the chain is Cytoplasmic. The region spanning 67-249 (DFDRVDWINR…WPKTLVVPIL (183 aa)) is the SMP-LTD domain. The phospholipid binding stretch occupies residues 227–509 (QEQIKDQVAN…TLGYVDIPVV (283 aa)). 2 consecutive C2 domains span residues 240–362 (WPKT…AFTL) and 401–521 (GFEE…NQKF). The Ca(2+) site is built by D276, D282, D332, and E334.

It belongs to the synaptotagmin family. Interacts with cabbage leaf curl virus (CaLCuV) BC1 protein and tobacco mosaic virus (TMV) MP protein. Interacts with ROSY1. It depends on Ca(2+) as a cofactor. In terms of tissue distribution, expressed in roots, shoots, rosette and cauline leaves, inflorescences, and siliques. In roots, expressed in vascular bundle, epidermis, the differential zone of the tips of root hairs, and the quiescent center and columella of root tips.

The protein localises to the cell membrane. The protein resides in the endosome membrane. Plays an important role in maintaining plasma membrane integrity during freezing and osmotic stresses. May function in membrane resealing during calcium-dependent freezing tolerance. May regulate endocytosis and endosome recycling at the plasma membrane and cell-to-cell trafficking of cabbage leaf curl virus (CaLCuV) and tobacco mosaic virus (TMV) movement proteins via plasmodesmata. The protein is Synaptotagmin-1 (SYT1) of Arabidopsis thaliana (Mouse-ear cress).